Reading from the N-terminus, the 123-residue chain is Small ribosomal subunit protein uS12 (123 aa).

The disordered stretch occupies residues 1-29; that stretch reads MPTINQLIRKKRQSSASRKKSPALQKCPQ. Over residues 8 to 21 the composition is skewed to basic residues; it reads IRKKRQSSASRKKS. Residue D89 is modified to 3-methylthioaspartic acid.

It belongs to the universal ribosomal protein uS12 family. As to quaternary structure, part of the 30S ribosomal subunit. Contacts proteins S8 and S17. May interact with IF1 in the 30S initiation complex.

With S4 and S5 plays an important role in translational accuracy. In terms of biological role, interacts with and stabilizes bases of the 16S rRNA that are involved in tRNA selection in the A site and with the mRNA backbone. Located at the interface of the 30S and 50S subunits, it traverses the body of the 30S subunit contacting proteins on the other side and probably holding the rRNA structure together. The combined cluster of proteins S8, S12 and S17 appears to hold together the shoulder and platform of the 30S subunit. The chain is Small ribosomal subunit protein uS12 from Chlamydia abortus (strain DSM 27085 / S26/3) (Chlamydophila abortus).